We begin with the raw amino-acid sequence, 255 residues long: Ribonuclease PH (255 aa).

Residues Arg86 and 124–126 (GTR) each bind phosphate.

This sequence belongs to the RNase PH family. As to quaternary structure, homohexameric ring arranged as a trimer of dimers.

It carries out the reaction tRNA(n+1) + phosphate = tRNA(n) + a ribonucleoside 5'-diphosphate. Functionally, phosphorolytic 3'-5' exoribonuclease that plays an important role in tRNA 3'-end maturation. Removes nucleotide residues following the 3'-CCA terminus of tRNAs; can also add nucleotides to the ends of RNA molecules by using nucleoside diphosphates as substrates, but this may not be physiologically important. Probably plays a role in initiation of 16S rRNA degradation (leading to ribosome degradation) during starvation. This chain is Ribonuclease PH, found in Hydrogenobaculum sp. (strain Y04AAS1).